The primary structure comprises 2057 residues: Fer-1-like protein 5 (2057 aa).

7 C2 domains span residues 1–99 (MLRL…VLFV), 152–265 (PGST…TLLR), 308–425 (DDTD…EGVY), 1057–1188 (DTRP…MRWH), 1213–1346 (KLGE…AQDY), 1467–1587 (PKPP…AHCG), and 1705–1853 (GPPG…KQCS). Positions 1502, 1508, 1557, 1558, 1559, 1562, 1565, 1824, 1827, and 1830 each coordinate Ca(2+). Residues 1962 to 1982 (LIAFMVISIIALMLFNFIYSA) traverse the membrane as a helical segment.

It belongs to the ferlin family. As to quaternary structure, interacts (via second C2 domain) with EHD1 and EHD2. Requires Ca(2+) as cofactor.

The protein resides in the cell membrane. The protein localises to the membrane. In terms of biological role, plays a role in myoblast fusion; probable mediator of endocytic recycling for membrane trafficking events during myotube formation. This is Fer-1-like protein 5 (FER1L5) from Homo sapiens (Human).